A 573-amino-acid polypeptide reads, in one-letter code: MSEIITLSYGSICNNTVTHLYNTQESLISYTPSSKPNHDLQVFLTRFKSTSVSYSPRALIYDLRNGLGALNKYEYHETLPVDLNFSLLSTNTTAPAGAETGAGSSLESGYNLKKSRVEKNEYQQKLDQGVTDGSSLNVNNTKYWTDYNKLIYNPKSLTTVNNFVHNENNHESGYHYNFNSLKYDSFNIGQEEFKACNNGNGGYGYDDNDNNKSIENFRYFLEKTDRLQGLQLLTNLNDAWGGFTSEMLIDLIDEFFNNTSSDKQNLWIYGIMNSTKLSEKTQSIRTKLSFIKTLIELTKQSSLIFPMNLNNSKDESWHNNYSMLTDKYNSGSNWHQSSLYATFINSIWGLNNQLKNQISMTHLQNDIVKLNPNQKIINQIKIKQEKSGNGDKQNQLFGSDLNQFNLKDIVNLKDLSNLGKSSDTSATQREINLGISKNASTNTGNDAYHNFVQNRISSSTSQNEKMMKDKEQEQNGIINNYLNPYIDNIFQVETFPVDILKSSSNAINISTEFNVNDGLKSYLKPYIKLVSNIRNQHREYLDIIEDKEELLEDLNNISQEYSYGYESDDEDYE.

This sequence belongs to the misato family.

It localises to the mitochondrion. Its function is as follows. Involved in the partitioning of the mitochondrial organelle and mitochondrial DNA (mtDNA) inheritance. In Candida albicans (strain SC5314 / ATCC MYA-2876) (Yeast), this protein is Protein DML1 (DML1).